The sequence spans 99 residues: Microcin E492 (99 aa).

The signal sequence occupies residues M1 to A15. A disordered region spans residues S80–S99. Residues G87 to S99 show a composition bias toward low complexity. S99 is modified (serine microcin E492 siderophore ester).

This sequence belongs to the class IIa microcin family. Multimer. Possibly forms a homodimer or a homotrimer. Post-translationally, the C-terminal Ser is modified by attachment to a siderophore similar to enterobactin, which can bind one atom of iron. The modification consists of an ester linkage of the serine carboxyl to O6 of a glucose which is linked by a C-glycosidic bond to the 5'-benzoyl of a linear triester of N-(2,3-dihydroxybenzoyl)serine. Presence of the siderophore ester increases the antibacterial activity of the protein.

In terms of biological role, channel-forming bacteriocin. Forms cation-selective channels. Active on enterobacteria, with highest activity against E.coli. Not active on other Gram-negative bacteria, Gram-positive bacteria or fungi. The unmodified protein is active against E.coli and S.enteritidis. When the siderophore ester is present at Ser-99, antibacterial activity against these species is increased and activity is also detected against E.cloacae and K.pneumoniae. Neutralized by its immunity protein MceB. The protein is Microcin E492 of Klebsiella pneumoniae.